Here is a 136-residue protein sequence, read N- to C-terminus: Large ribosomal subunit protein uL16 (136 aa).

This sequence belongs to the universal ribosomal protein uL16 family. As to quaternary structure, part of the 50S ribosomal subunit.

In terms of biological role, binds 23S rRNA and is also seen to make contacts with the A and possibly P site tRNAs. This is Large ribosomal subunit protein uL16 from Shewanella loihica (strain ATCC BAA-1088 / PV-4).